A 525-amino-acid chain; its full sequence is GMP synthase [glutamine-hydrolyzing] (525 aa).

A Glutamine amidotransferase type-1 domain is found at 16 to 205; that stretch reads PVLVVDFGAQ…LHDFAGLGAQ (190 aa). Residue Cys-93 is the Nucleophile of the active site. Residues His-179 and Glu-181 contribute to the active site. One can recognise a GMPS ATP-PPase domain in the interval 206–399; it reads WTPANIANAL…LGLPEEIVAR (194 aa). 233-239 is a binding site for ATP; the sequence is SGGVDSA.

Homodimer.

The catalysed reaction is XMP + L-glutamine + ATP + H2O = GMP + L-glutamate + AMP + diphosphate + 2 H(+). It functions in the pathway purine metabolism; GMP biosynthesis; GMP from XMP (L-Gln route): step 1/1. Catalyzes the synthesis of GMP from XMP. The protein is GMP synthase [glutamine-hydrolyzing] (guaA) of Mycobacterium tuberculosis (strain CDC 1551 / Oshkosh).